The chain runs to 424 residues: GTPase Obg (424 aa).

The Obg domain maps to 1 to 158 (MFVDKARIFV…RWISLELKLL (158 aa)). The region spanning 159–331 (ADVGLIGFPN…LLKECARVLS (173 aa)) is the OBG-type G domain. Residues 165-172 (GFPNVGKS), 190-194 (FTTIT), 212-215 (DIPG), 282-285 (NKAD), and 312-314 (SAA) each bind GTP. Mg(2+) is bound by residues Ser172 and Thr192. In terms of domain architecture, OCT spans 345 to 424 (RFVPEDKHFT…LNDFEFEFLK (80 aa)).

It belongs to the TRAFAC class OBG-HflX-like GTPase superfamily. OBG GTPase family. In terms of assembly, monomer. Mg(2+) is required as a cofactor.

The protein resides in the cytoplasm. Functionally, an essential GTPase which binds GTP, GDP and possibly (p)ppGpp with moderate affinity, with high nucleotide exchange rates and a fairly low GTP hydrolysis rate. Plays a role in control of the cell cycle, stress response, ribosome biogenesis and in those bacteria that undergo differentiation, in morphogenesis control. The sequence is that of GTPase Obg from Clostridium acetobutylicum (strain ATCC 824 / DSM 792 / JCM 1419 / IAM 19013 / LMG 5710 / NBRC 13948 / NRRL B-527 / VKM B-1787 / 2291 / W).